The primary structure comprises 446 residues: Tol-Pal system protein TolB (446 aa).

A signal peptide spans 1–43 (MRKLWAPNWLSRRQNANPTRDQSRHALMAWLAAALMSAGAAHA).

This sequence belongs to the TolB family. The Tol-Pal system is composed of five core proteins: the inner membrane proteins TolA, TolQ and TolR, the periplasmic protein TolB and the outer membrane protein Pal. They form a network linking the inner and outer membranes and the peptidoglycan layer.

Its subcellular location is the periplasm. Functionally, part of the Tol-Pal system, which plays a role in outer membrane invagination during cell division and is important for maintaining outer membrane integrity. The sequence is that of Tol-Pal system protein TolB from Cupriavidus metallidurans (strain ATCC 43123 / DSM 2839 / NBRC 102507 / CH34) (Ralstonia metallidurans).